The sequence spans 122 residues: Large ribosomal subunit protein uL18 (122 aa).

The span at 1–22 (MDKNKKLQSKRLRRRRHVRNKL) shows a compositional bias: basic residues. The segment at 1-25 (MDKNKKLQSKRLRRRRHVRNKLRGS) is disordered.

Belongs to the universal ribosomal protein uL18 family. Part of the 50S ribosomal subunit; part of the 5S rRNA/L5/L18/L25 subcomplex. Contacts the 5S and 23S rRNAs.

Functionally, this is one of the proteins that bind and probably mediate the attachment of the 5S RNA into the large ribosomal subunit, where it forms part of the central protuberance. This Rhodopirellula baltica (strain DSM 10527 / NCIMB 13988 / SH1) protein is Large ribosomal subunit protein uL18.